We begin with the raw amino-acid sequence, 116 residues long: Large ribosomal subunit protein bL19 (116 aa).

It belongs to the bacterial ribosomal protein bL19 family.

This protein is located at the 30S-50S ribosomal subunit interface and may play a role in the structure and function of the aminoacyl-tRNA binding site. This chain is Large ribosomal subunit protein bL19, found in Shewanella loihica (strain ATCC BAA-1088 / PV-4).